The following is a 213-amino-acid chain: Glycerol-3-phosphate acyltransferase (213 aa).

A run of 6 helical transmembrane segments spans residues 3 to 23 (ILLL…LWIG), 54 to 76 (TITF…WLGI), 83 to 100 (IIGF…FTGF), 110 to 130 (AGVL…VFAL), 142 to 162 (SITA…IHFL), and 163 to 183 (LDGY…VIIF).

It belongs to the PlsY family. Probably interacts with PlsX.

The protein resides in the cell membrane. The catalysed reaction is an acyl phosphate + sn-glycerol 3-phosphate = a 1-acyl-sn-glycero-3-phosphate + phosphate. The protein operates within lipid metabolism; phospholipid metabolism. In terms of biological role, catalyzes the transfer of an acyl group from acyl-phosphate (acyl-PO(4)) to glycerol-3-phosphate (G3P) to form lysophosphatidic acid (LPA). This enzyme utilizes acyl-phosphate as fatty acyl donor, but not acyl-CoA or acyl-ACP. The polypeptide is Glycerol-3-phosphate acyltransferase (Streptococcus thermophilus (strain ATCC BAA-491 / LMD-9)).